A 383-amino-acid chain; its full sequence is Probable assembly chaperone of rpl4 (383 aa).

The span at 1–12 shows a compositional bias: basic residues; sequence MGKPRPHKKKAS. The interval 1-33 is disordered; it reads MGKPRPHKKKASKTREKSVLSAGGSISKRKMNE. TPR repeat units follow at residues 35–68, 73–106, 116–147, and 193–226; these read PRKL…ATSN, LSSL…DPTG, AEKF…LRGI, and PEVL…WKDL. Residues 345–383 are disordered; sequence NKELGEEMEDDSNVEDGEGEGEEEWEGIESDSDHEMADS. A compositionally biased stretch (acidic residues) spans 350-374; that stretch reads EEMEDDSNVEDGEGEGEEEWEGIES.

It belongs to the ACL4 family.

Its subcellular location is the cytoplasm. It is found in the nucleus. Acts as a chaperone for the L4 ribosomal subunit, required for hierarchical ribosome assembly. Shields ribosomal protein L4 until timely release and insertion into the pre-ribosome is possible, once ribosomal protein L18 is present. This is Probable assembly chaperone of rpl4 from Emericella nidulans (strain FGSC A4 / ATCC 38163 / CBS 112.46 / NRRL 194 / M139) (Aspergillus nidulans).